Consider the following 349-residue polypeptide: Anthranilate phosphoribosyltransferase (349 aa).

5-phospho-alpha-D-ribose 1-diphosphate-binding positions include Gly82, Gly85–Asp86, Asn92–Thr95, Lys110–Gly118, and Ser122. Gly82 contacts anthranilate. Ser94 contributes to the Mg(2+) binding site. Residue Asn113 coordinates anthranilate. Arg168 contributes to the anthranilate binding site. Residues Asp227 and Glu228 each coordinate Mg(2+).

It belongs to the anthranilate phosphoribosyltransferase family. In terms of assembly, homodimer. The cofactor is Mg(2+).

It carries out the reaction N-(5-phospho-beta-D-ribosyl)anthranilate + diphosphate = 5-phospho-alpha-D-ribose 1-diphosphate + anthranilate. It functions in the pathway amino-acid biosynthesis; L-tryptophan biosynthesis; L-tryptophan from chorismate: step 2/5. Its function is as follows. Catalyzes the transfer of the phosphoribosyl group of 5-phosphorylribose-1-pyrophosphate (PRPP) to anthranilate to yield N-(5'-phosphoribosyl)-anthranilate (PRA). The polypeptide is Anthranilate phosphoribosyltransferase (Pseudomonas fluorescens (strain ATCC BAA-477 / NRRL B-23932 / Pf-5)).